Reading from the N-terminus, the 258-residue chain is Acetylglutamate kinase (258 aa).

Substrate contacts are provided by residues 41–42 (GG), Arg63, and Asn156.

The protein belongs to the acetylglutamate kinase family. ArgB subfamily.

It localises to the cytoplasm. It carries out the reaction N-acetyl-L-glutamate + ATP = N-acetyl-L-glutamyl 5-phosphate + ADP. It participates in amino-acid biosynthesis; L-arginine biosynthesis; N(2)-acetyl-L-ornithine from L-glutamate: step 2/4. Its function is as follows. Catalyzes the ATP-dependent phosphorylation of N-acetyl-L-glutamate. In Geobacillus kaustophilus (strain HTA426), this protein is Acetylglutamate kinase.